The sequence spans 783 residues: Galactinol--sucrose galactosyltransferase (783 aa).

The protein belongs to the glycosyl hydrolases 36 family.

It carries out the reaction alpha-D-galactosyl-(1-&gt;3)-1D-myo-inositol + sucrose = raffinose + myo-inositol. With respect to regulation, inhibited by Ag(2)+, Hg(2+), Zn(2+), p-chloromercuribenzoate (pCMB) and 1-deoxygalactonojirimycin. In terms of biological role, transglycosidase operating by a ping-pong reaction mechanism. Involved in the synthesis of raffinose, a major soluble carbohydrate in seeds, roots and tubers. Specific for galactinol and p-nitrophenyl-alpha-D-galactoside as galactosyl donors. Able to utilize sucrose, lactose, 4-beta-galactobiose, N-acetyl-D-lactosamine, trehalose and lacto-N-biose as acceptors. May also act as a glycoside hydrolase. The protein is Galactinol--sucrose galactosyltransferase (RFS) of Oryza sativa subsp. japonica (Rice).